We begin with the raw amino-acid sequence, 182 residues long: Probable tryptophan transport protein (182 aa).

The next 4 membrane-spanning stretches (helical) occupy residues isoleucine 10–leucine 32, isoleucine 55–glycine 75, isoleucine 119–glycine 141, and phenylalanine 146–leucine 168.

The protein belongs to the vitamin uptake transporter (VUT/ECF) (TC 2.A.88) family. TrpP subfamily.

The protein resides in the cell membrane. In terms of biological role, probably involved in tryptophan uptake. In Clostridium perfringens (strain 13 / Type A), this protein is Probable tryptophan transport protein (trpP).